We begin with the raw amino-acid sequence, 368 residues long: Cobalt-precorrin-5B C(1)-methyltransferase (368 aa).

This sequence belongs to the CbiD family.

The catalysed reaction is Co-precorrin-5B + S-adenosyl-L-methionine = Co-precorrin-6A + S-adenosyl-L-homocysteine. The protein operates within cofactor biosynthesis; adenosylcobalamin biosynthesis; cob(II)yrinate a,c-diamide from sirohydrochlorin (anaerobic route): step 6/10. Functionally, catalyzes the methylation of C-1 in cobalt-precorrin-5B to form cobalt-precorrin-6A. The protein is Cobalt-precorrin-5B C(1)-methyltransferase of Brucella ovis (strain ATCC 25840 / 63/290 / NCTC 10512).